Consider the following 862-residue polypeptide: Cone cGMP-specific 3',5'-cyclic phosphodiesterase subunit alpha' (862 aa).

2 GAF domains span residues 75–224 (SMEK…SLVL) and 256–433 (DIER…GWSV). Residues Ser97, Asn116, 169–172 (DKKT), and Thr176 each bind 3',5'-cyclic GMP. Residues 486–819 (DEKDLIRILK…VEWKTRADEY (334 aa)) enclose the PDEase domain. The active-site Proton donor is the His562. 4 residues coordinate a divalent metal cation: His566, His602, Asp603, and Asp723. A compositionally biased stretch (basic and acidic residues) spans 830–842 (KKKEEEAAAKKAE). The tract at residues 830-862 (KKKEEEAAAKKAENAAGGGGGGEDGKSKTCIVL) is disordered. Cys859 is modified (cysteine methyl ester). Cys859 carries the S-geranylgeranyl cysteine lipid modification. A propeptide spans 860-862 (IVL) (removed in mature form).

This sequence belongs to the cyclic nucleotide phosphodiesterase family. As to quaternary structure, composed of two alpha' subunits that are associated with 3 smaller proteins of 11, 13, and 15 kDa. Requires a divalent metal cation as cofactor.

Its subcellular location is the cell membrane. The catalysed reaction is 3',5'-cyclic GMP + H2O = GMP + H(+). As cone-specific cGMP phosphodiesterase, it plays an essential role in light detection and cone phototransduction by rapidly decreasing intracellular levels of cGMP. This is Cone cGMP-specific 3',5'-cyclic phosphodiesterase subunit alpha' (PDE6C) from Gallus gallus (Chicken).